The chain runs to 386 residues: ABC transporter permease protein NatB (386 aa).

6 helical membrane-spanning segments follow: residues 19 to 39, 172 to 192, 226 to 246, 273 to 293, 300 to 320, and 353 to 373; these read TILLTILVPMIMMLGLVFFYE, AIMLSAILPMLILTSIVSGAM, WLAVSTFGVASGVFALVFLIL, ALIIVLSALLISAMELFISIM, AQSYMSLVVFLPVFPMFFIFS, and ATILSTSGTIAVLIAIFFLLA.

As to quaternary structure, the complex is composed of NatA and NatB.

The protein resides in the cell membrane. It carries out the reaction Na(+)(in) + ATP + H2O = Na(+)(out) + ADP + phosphate + H(+). Functionally, part of an ABC transporter that catalyzes ATP-dependent electrogenic sodium extrusion. This Bacillus subtilis (strain 168) protein is ABC transporter permease protein NatB.